Reading from the N-terminus, the 197-residue chain is RILP-like protein 2 (197 aa).

A disordered region spans residues 1 to 24 (MEDHPVREEEDGEEDEGALAKSPL). Residues 8–17 (EEEDGEEDEG) are compositionally biased toward acidic residues. The RH1 domain occupies 14 to 96 (EDEGALAKSP…KQEVEGLRKA (83 aa)). Positions 69 to 153 (VNEGSLAVEE…VQEELQCYRS (85 aa)) form a coiled coil. An RH2 domain is found at 119–184 (RPRFTLQELR…GNGEKEERTI (66 aa)).

It belongs to the RILPL family. Homodimer. Interacts with RAC1. Interacts (via N-terminus) with MYO5A, the interaction is required for its role in dendrite formation. Interacts with RAB8A; interaction is dependent on the phosphorylation of RAB8A on 'Thr-72'. Interacts with RAB10 and RAB12; interaction is dependent on the phosphorylation of 'Thr-73' on RAB10 and 'Ser-105' on RAB12.

The protein localises to the cytoplasm. Its subcellular location is the cytosol. The protein resides in the cytoskeleton. It is found in the microtubule organizing center. It localises to the centrosome. The protein localises to the cell projection. Its subcellular location is the cilium. Its function is as follows. Involved in cell shape and neuronal morphogenesis, positively regulating the establishment and maintenance of dendritic spines. Plays a role in cellular protein transport, including protein transport away from primary cilia. May function via activation of RAC1 and PAK1. This is RILP-like protein 2 (Rilpl2) from Mus musculus (Mouse).